We begin with the raw amino-acid sequence, 164 residues long: Phosphopantetheine adenylyltransferase (164 aa).

Serine 9 contacts substrate. ATP-binding positions include serine 9 to phenylalanine 10 and histidine 17. Substrate contacts are provided by lysine 41, leucine 73, and lysine 87. Residues glycine 88–arginine 90, glutamate 98, and tyrosine 123–serine 129 contribute to the ATP site.

The protein belongs to the bacterial CoaD family. Homohexamer. Requires Mg(2+) as cofactor.

The protein resides in the cytoplasm. It catalyses the reaction (R)-4'-phosphopantetheine + ATP + H(+) = 3'-dephospho-CoA + diphosphate. It functions in the pathway cofactor biosynthesis; coenzyme A biosynthesis; CoA from (R)-pantothenate: step 4/5. Its function is as follows. Reversibly transfers an adenylyl group from ATP to 4'-phosphopantetheine, yielding dephospho-CoA (dPCoA) and pyrophosphate. This Clostridium perfringens (strain 13 / Type A) protein is Phosphopantetheine adenylyltransferase.